Consider the following 451-residue polypeptide: UDP-glucosyltransferase 74AE2 (451 aa).

His17 functions as the Proton acceptor in the catalytic mechanism. His17 provides a ligand contact to an anthocyanidin. Residue Asp108 is the Charge relay of the active site. The UDP-alpha-D-glucose site is built by Thr130, Gln330, His345, Trp348, Asn349, Ser350, Glu353, Asp369, and Gln370.

This sequence belongs to the UDP-glycosyltransferase family. Expressed at higher levels in roots than in leaves.

The catalysed reaction is (20S)-ginsenoside C-K + UDP-alpha-D-glucose = (20S)-ginsenoside F2 + UDP + H(+). It carries out the reaction (20S)-protopanaxadiol + UDP-alpha-D-glucose = (20S)-ginsenoside Rh2 + UDP + H(+). It functions in the pathway secondary metabolite biosynthesis; terpenoid biosynthesis. Component of the dammarane-type triterpene saponins (e.g. PPD-type ginsenosides or panaxosides) biosynthetic pathway. Glycosyltransferase that catalyzes the biosynthesis of ginsenoside Rh2 from protopanaxadiol (PPD) and the conversion of compound K to ginsenoside F2. The chain is UDP-glucosyltransferase 74AE2 from Panax ginseng (Korean ginseng).